Consider the following 1278-residue polypeptide: Dynactin subunit 1 (1278 aa).

A disordered region spans residues 1-25 (MAQSKRHVYSRTPSGSRMSAEASAR). The CAP-Gly domain maps to 48–90 (GATLFATGKWVGVILDEAKGKNDGTVQGRKYFTCDEGHGIFVR). The segment at 100 to 223 (GADTTSPETP…SKEEEGLRAQ (124 aa)) is disordered. Over residues 102-114 (DTTSPETPDSSAS) the composition is skewed to polar residues. Thr-108 bears the Phosphothreonine mark. The span at 129–152 (SKLRGLKPKKAPTARKTTTRRPKP) shows a compositional bias: basic residues. A phosphothreonine; by SLK mark is found at Thr-145, Thr-146, and Thr-147. The segment covering 161 to 184 (AGASSSLGPSGSASAGELSSSEPS) has biased composition (low complexity). A Phosphoserine; by PLK1 modification is found at Ser-179. A Phosphoserine; by CDK1 modification is found at Ser-212. 3 coiled-coil regions span residues 213 to 547 (PSKE…RQQQ), 943 to 1049 (LKLE…EGLR), and 1182 to 1211 (SAQL…KETV). A compositionally biased stretch (basic and acidic residues) spans 214–223 (SKEEEGLRAQ). Residues 911 to 1278 (EYDAERPPSK…LHQLHSRLIS (368 aa)) are interaction with HPS6.

It belongs to the dynactin 150 kDa subunit family. Monomer and homodimer. Subunit of dynactin, a multiprotein complex part of a tripartite complex with dynein and a adapter, such as BICDL1, BICD2 or HOOK3. The dynactin complex is built around ACTR1A/ACTB filament and consists of an actin-related filament composed of a shoulder domain, a pointed end and a barbed end. Its length is defined by its flexible shoulder domain. The soulder is composed of 2 DCTN1 subunits, 4 DCTN2 and 2 DCTN3. DCTN1/p150(glued) binds directly to microtubules and to cytoplasmic dynein. The 4 DCNT2 (via N-terminus) bind the ACTR1A filament and act as molecular rulers to determine the length. The pointed end is important for binding dynein-dynactin cargo adapters. Consists of 4 subunits: ACTR10, DCNT4, DCTN5 and DCTN6. The barbed end is composed of a CAPZA1:CAPZB heterodimers, which binds ACTR1A/ACTB filament and dynactin and stabilizes dynactin. Interacts with the C-terminus of MAPRE1, MAPRE2 and MAPRE3. Interacts (via C-terminus) with SNX6. Interacts with CLN3, DYNAP, ECPAS and FBXL5. Interacts with MISP; this interaction regulates its distribution at the cell cortex. Interacts with CEP131. Interacts with CEP126. Interacts with CLIP1. Interacts with dynein intermediate chain and dynein heavy chain. Interacts with PLK1 (via POLO-box domain). Interacts with TBCB. Binds preferentially to tyrosinated microtubules than to detyrosinated microtubules. Interacts with PARD6A. Interacts with HPS6. Interacts with KIF3A. Interacts with BICD2. Interacts with DST (isoform 9). Interacts with DST (isoform 1). Identified in a complex with MREG and RILP. Interacts with BCCIP (isoform 2/alpha). Interacts with DCDC1. Interacts with AKNA. Interacts with DYNC1I2. Interacts with RUFY3 and RUFY4. In terms of processing, ubiquitinated by a SCF complex containing FBXL5, leading to its degradation by the proteasome. Phosphorylation by SLK at Thr-145, Thr-146 and Thr-147 targets DCTN1 to the centrosome. It is uncertain if SLK phosphorylates all three threonines or one or two of them. PLK1-mediated phosphorylation at Ser-179 is essential for its localization in the nuclear envelope, promotes its dissociation from microtubules during early mitosis and positively regulates nuclear envelope breakdown during prophase. Brain.

It localises to the cytoplasm. It is found in the cytoskeleton. Its subcellular location is the microtubule organizing center. The protein localises to the centrosome. The protein resides in the centriole. It localises to the spindle. It is found in the nucleus envelope. Its subcellular location is the cell cortex. Its function is as follows. Part of the dynactin complex that activates the molecular motor dynein for ultra-processive transport along microtubules. Plays a key role in dynein-mediated retrograde transport of vesicles and organelles along microtubules by recruiting and tethering dynein to microtubules. Binds to both dynein and microtubules providing a link between specific cargos, microtubules and dynein. Essential for targeting dynein to microtubule plus ends, recruiting dynein to membranous cargos and enhancing dynein processivity (the ability to move along a microtubule for a long distance without falling off the track). Can also act as a brake to slow the dynein motor during motility along the microtubule. Can regulate microtubule stability by promoting microtubule formation, nucleation and polymerization and by inhibiting microtubule catastrophe in neurons. Inhibits microtubule catastrophe by binding both to microtubules and to tubulin, leading to enhanced microtubule stability along the axon. Plays a role in metaphase spindle orientation. Plays a role in centriole cohesion and subdistal appendage organization and function. Its recruitment to the centriole in a KIF3A-dependent manner is essential for the maintenance of centriole cohesion and the formation of subdistal appendage. Also required for microtubule anchoring at the mother centriole. Plays a role in primary cilia formation. This is Dynactin subunit 1 from Homo sapiens (Human).